We begin with the raw amino-acid sequence, 78 residues long: Omega-conotoxin-like Ac6.5 (78 aa).

An N-terminal signal peptide occupies residues 1-22 (MKLTCVVIVAVLLLTACQLLTA). Positions 23–42 (DDSRGTQKHRSLRSTTKVSK) are excised as a propeptide. Disulfide bonds link cysteine 46–cysteine 62, cysteine 53–cysteine 65, and cysteine 61–cysteine 72. Proline 55 and proline 67 each carry 4-hydroxyproline.

The protein belongs to the conotoxin O1 superfamily. As to expression, expressed by the venom duct.

The protein resides in the secreted. Its function is as follows. Omega-conotoxins act at presynaptic membranes, they bind and block voltage-gated calcium channels (Cav). This Conus achatinus (Little frog cone) protein is Omega-conotoxin-like Ac6.5.